A 141-amino-acid chain; its full sequence is Nucleoside diphosphate kinase (141 aa).

ATP is bound by residues Lys-11, Phe-59, Arg-87, Thr-93, Arg-104, and Asn-114. His-117 serves as the catalytic Pros-phosphohistidine intermediate.

This sequence belongs to the NDK family. Homotetramer. The cofactor is Mg(2+).

It localises to the cytoplasm. It carries out the reaction a 2'-deoxyribonucleoside 5'-diphosphate + ATP = a 2'-deoxyribonucleoside 5'-triphosphate + ADP. It catalyses the reaction a ribonucleoside 5'-diphosphate + ATP = a ribonucleoside 5'-triphosphate + ADP. Functionally, major role in the synthesis of nucleoside triphosphates other than ATP. The ATP gamma phosphate is transferred to the NDP beta phosphate via a ping-pong mechanism, using a phosphorylated active-site intermediate. The chain is Nucleoside diphosphate kinase from Legionella pneumophila (strain Lens).